Here is a 664-residue protein sequence, read N- to C-terminus: Glycine--tRNA ligase beta subunit (664 aa).

This sequence belongs to the class-II aminoacyl-tRNA synthetase family. In terms of assembly, tetramer of two alpha and two beta subunits.

Its subcellular location is the cytoplasm. The catalysed reaction is tRNA(Gly) + glycine + ATP = glycyl-tRNA(Gly) + AMP + diphosphate. This chain is Glycine--tRNA ligase beta subunit, found in Rickettsia typhi (strain ATCC VR-144 / Wilmington).